Reading from the N-terminus, the 216-residue chain is Imidazole glycerol phosphate synthase subunit HisH (216 aa).

The region spanning 2–216 (SIAIIDYGSG…LISNFLRWKP (215 aa)) is the Glutamine amidotransferase type-1 domain. The active-site Nucleophile is Cys-88. Catalysis depends on residues His-196 and Glu-198.

As to quaternary structure, heterodimer of HisH and HisF.

The protein resides in the cytoplasm. The catalysed reaction is 5-[(5-phospho-1-deoxy-D-ribulos-1-ylimino)methylamino]-1-(5-phospho-beta-D-ribosyl)imidazole-4-carboxamide + L-glutamine = D-erythro-1-(imidazol-4-yl)glycerol 3-phosphate + 5-amino-1-(5-phospho-beta-D-ribosyl)imidazole-4-carboxamide + L-glutamate + H(+). It carries out the reaction L-glutamine + H2O = L-glutamate + NH4(+). It participates in amino-acid biosynthesis; L-histidine biosynthesis; L-histidine from 5-phospho-alpha-D-ribose 1-diphosphate: step 5/9. IGPS catalyzes the conversion of PRFAR and glutamine to IGP, AICAR and glutamate. The HisH subunit catalyzes the hydrolysis of glutamine to glutamate and ammonia as part of the synthesis of IGP and AICAR. The resulting ammonia molecule is channeled to the active site of HisF. The protein is Imidazole glycerol phosphate synthase subunit HisH of Bradyrhizobium diazoefficiens (strain JCM 10833 / BCRC 13528 / IAM 13628 / NBRC 14792 / USDA 110).